The sequence spans 275 residues: MQNNEIIKPAKYFSELEKSILLALVEKYKYVLECKKSDARTIALKQRTWQALAHEYNSQPSVSLRDFKQLKKCWENIKARTKKIMAHERREKVKRSVSPLLSTHVLGKEKIASMLPEQLYFLQSPPEEEPEYHPDASAQESFAVSNRELCDDEKEFIHFPVCEGTSQPEPSCSAVRITANKNYRSKTSQEGALKKMHEEEHHQQMSILQLQLIQMNEVHVAKIQQIERECEMAEEEHRIKMEVLNKKKMYWERKLQTFTKEWPVSSFNRPFPNSP.

One can recognise a Myb-like domain in the interval 13–78; it reads FSELEKSILL…QLKKCWENIK (66 aa). Phosphoserine is present on residues serine 96 and serine 98. Lysine 154 is covalently cross-linked (Glycyl lysine isopeptide (Lys-Gly) (interchain with G-Cter in SUMO2)). Residues 211–247 adopt a coiled-coil conformation; it reads QLIQMNEVHVAKIQQIERECEMAEEEHRIKMEVLNKK. Serine 274 is subject to Phosphoserine.

Belongs to the MSANTD3 family. Expressed in brain.

In Homo sapiens (Human), this protein is Myb/SANT-like DNA-binding domain-containing protein 3 (MSANTD3).